A 603-amino-acid polypeptide reads, in one-letter code: Myotubularin (603 aa).

Polar residues predominate over residues 1 to 13 (MASAPTSKYNSHS). Positions 1 to 32 (MASAPTSKYNSHSLENESIKRTSRDGVNRDVG) are disordered. Phosphoserine is present on residues Ser13 and Ser18. Residues 14–32 (LENESIKRTSRDGVNRDVG) are compositionally biased toward basic and acidic residues. The region spanning 29–97 (RDVGETLPRL…GVISRIEKMG (69 aa)) is the GRAM domain. The region spanning 163–538 (GWTVYNPVEE…RHLELWVNYY (376 aa)) is the Myotubularin phosphatase domain. Residues Asn288, Asn313, and Ile314 each coordinate a 1,2-diacyl-sn-glycero-3-phospho-(1D-myo-inositol-3,5-bisphosphate). A 1,2-diacyl-sn-glycero-3-phospho-(1D-myo-inositol-3-phosphate)-binding residues include Asn288, Asn313, and Ile314. Catalysis depends on Cys375, which acts as the Phosphocysteine intermediate. Ser376, Asp377, Gly378, Trp379, Asp380, Arg381, Lys417, and Arg421 together coordinate a 1,2-diacyl-sn-glycero-3-phospho-(1D-myo-inositol-3,5-bisphosphate). A 1,2-diacyl-sn-glycero-3-phospho-(1D-myo-inositol-3-phosphate) contacts are provided by Ser376, Asp377, Gly378, Trp379, Asp380, and Arg381. Arg421 provides a ligand contact to a 1,2-diacyl-sn-glycero-3-phospho-(1D-myo-inositol-3-phosphate). Residue Thr495 is modified to Phosphothreonine. The interval 580 to 603 (AKLSDPSASPSSPSQMMPHVQTHF) is disordered. Residues 583–593 (SDPSASPSSPS) are compositionally biased toward low complexity. Ser588 carries the phosphoserine modification.

It belongs to the protein-tyrosine phosphatase family. Non-receptor class myotubularin subfamily. As to quaternary structure, heterodimer with MTMR12. Interacts with KMT2A/MLL1 (via SET domain). Interacts with DES in skeletal muscle but not in cardiac muscle. Interacts with SPEG.

The protein localises to the cytoplasm. It is found in the cell membrane. It localises to the cell projection. The protein resides in the filopodium. Its subcellular location is the ruffle. The protein localises to the late endosome. It is found in the myofibril. It localises to the sarcomere. The catalysed reaction is a 1,2-diacyl-sn-glycero-3-phospho-(1D-myo-inositol-3-phosphate) + H2O = a 1,2-diacyl-sn-glycero-3-phospho-(1D-myo-inositol) + phosphate. The enzyme catalyses a 1,2-diacyl-sn-glycero-3-phospho-(1D-myo-inositol-3,5-bisphosphate) + H2O = a 1,2-diacyl-sn-glycero-3-phospho-(1D-myo-inositol-5-phosphate) + phosphate. It carries out the reaction 1,2-dioctanoyl-sn-glycero-3-phospho-(1-D-myo-inositol-3-phosphate) + H2O = 1,2-dioctanoyl-sn-glycero-3-phospho-(1D-myo-inositol) + phosphate. It catalyses the reaction 1,2-dioctanoyl-sn-glycero-3-phospho-(1D-myo-inositol-3,5-bisphosphate) + H2O = 1,2-dioctanoyl-sn-glycero-3-phospho-(1D-myo-inositol-5-phosphate) + phosphate. The catalysed reaction is 1,2-dihexadecanoyl-sn-glycero-3-phospho-(1D-myo-inositol-3,5-phosphate) + H2O = 1,2-dihexadecanoyl-sn-glycero-3-phospho-(1D-myo-inositol-5-phosphate) + phosphate. With respect to regulation, allosterically activated by phosphatidylinositol 5-phosphate (PI5P). Lipid phosphatase which dephosphorylates phosphatidylinositol 3-monophosphate (PI3P) and phosphatidylinositol 3,5-bisphosphate (PI(3,5)P2). Has also been shown to dephosphorylate phosphotyrosine- and phosphoserine-containing peptides. Negatively regulates EGFR degradation through regulation of EGFR trafficking from the late endosome to the lysosome. Plays a role in vacuolar formation and morphology. Regulates desmin intermediate filament assembly and architecture. Plays a role in mitochondrial morphology and positioning. Required for skeletal muscle maintenance but not for myogenesis. In skeletal muscles, stabilizes MTMR12 protein levels. The sequence is that of Myotubularin from Bos taurus (Bovine).